The primary structure comprises 462 residues: NAD-capped RNA hydrolase NUDT12 (462 aa).

ANK repeat units follow at residues Glu11–Asn40, Asn45–Ile74, and Ser78–Leu98. Residue Lys185 is modified to N6-succinyllysine. 2 residues coordinate Zn(2+): Cys284 and Cys287. Lys292 bears the N6-succinyllysine mark. Residues Cys302 and Cys307 each contribute to the Zn(2+) site. Residues Tyr318, Ala354–Phe356, Glu370, Glu374, and Glu415 contribute to the substrate site. One can recognise a Nudix hydrolase domain in the interval Pro319–Lys453. Positions 354, 370, 374, and 415 each coordinate Mg(2+). The Nudix box motif lies at Gly355 to Gly376. The short motif at Pro460 to Leu462 is the Microbody targeting signal element.

It belongs to the Nudix hydrolase family. NudC subfamily. In terms of assembly, homodimer. Homodimerization is essential for its catalytic activity and protein stability. Interacts (via ANK repeats) with BLMH. It depends on Mg(2+) as a cofactor. The cofactor is Zn(2+).

It localises to the cytoplasm. It is found in the peroxisome. The protein resides in the cytoplasmic granule. It carries out the reaction a 5'-end NAD(+)-phospho-ribonucleoside in mRNA + H2O = a 5'-end phospho-adenosine-phospho-ribonucleoside in mRNA + beta-nicotinamide D-ribonucleotide + 2 H(+). It catalyses the reaction NAD(+) + H2O = beta-nicotinamide D-ribonucleotide + AMP + 2 H(+). The catalysed reaction is NADH + H2O = reduced beta-nicotinamide D-ribonucleotide + AMP + 2 H(+). The enzyme catalyses NADPH + H2O = reduced beta-nicotinamide D-ribonucleotide + adenosine 2',5'-bisphosphate + 2 H(+). Its function is as follows. mRNA decapping enzyme that specifically removes the nicotinamide adenine dinucleotide (NAD) cap from a subset of mRNAs by hydrolyzing the diphosphate linkage to produce nicotinamide mononucleotide (NMN) and 5' monophosphate mRNA. The NAD-cap is present at the 5'-end of some RNAs; in contrast to the canonical N7 methylguanosine (m7G) cap, the NAD cap promotes mRNA decay. Preferentially acts on NAD-capped transcripts in response to nutrient stress. Also acts on free nicotinamide adenine dinucleotide molecules: hydrolyzes NAD(H) into NMN(H) and AMP, and NADPH into NMNH and 2',5'-ADP. May act to regulate the concentration of peroxisomal nicotinamide nucleotide cofactors required for oxidative metabolism in this organelle. Regulates the levels of circadian clock components PER1, PER2, PER3 and CRY2 in the liver. This is NAD-capped RNA hydrolase NUDT12 from Homo sapiens (Human).